The following is a 480-amino-acid chain: RuvB-like helicase 2 (480 aa).

ATP is bound at residue 73 to 80 (GEPSTGKT).

It belongs to the RuvB family. In terms of assembly, forms homohexameric rings. May form a dodecamer with rept made of two stacked hexameric rings. Component of the chromatin remodeling Ino80 complex.

The protein localises to the nucleus. The catalysed reaction is ATP + H2O = ADP + phosphate + H(+). Functionally, acts as a transcriptional coactivator in Wg signaling caused by altered arm signaling. Pont and rept interfere antagonistically with nuclear arm signaling function, and are required to enhance or reduce arm activity, respectively. Also an essential cofactor for the normal function of Myc; required for cellular proliferation and growth. Its function is as follows. Proposed core component of the chromatin remodeling Ino80 complex which is involved in transcriptional regulation, DNA replication and probably DNA repair. The sequence is that of RuvB-like helicase 2 from Drosophila pseudoobscura pseudoobscura (Fruit fly).